The sequence spans 289 residues: Ribosomal protein L11 methyltransferase (289 aa).

S-adenosyl-L-methionine is bound by residues Thr142, Gly163, Asp185, and Asn226.

It belongs to the methyltransferase superfamily. PrmA family.

It is found in the cytoplasm. The catalysed reaction is L-lysyl-[protein] + 3 S-adenosyl-L-methionine = N(6),N(6),N(6)-trimethyl-L-lysyl-[protein] + 3 S-adenosyl-L-homocysteine + 3 H(+). Its function is as follows. Methylates ribosomal protein L11. This chain is Ribosomal protein L11 methyltransferase, found in Legionella pneumophila subsp. pneumophila (strain Philadelphia 1 / ATCC 33152 / DSM 7513).